We begin with the raw amino-acid sequence, 298 residues long: ER-bound oxygenase mpaB (298 aa).

Residues 1–24 (MDKGTSFFTTPSFSATTRAIFNTM) are Lumenal-facing. Residues 25-45 (PQWFSFAVGLLIAYPLLINSL) form a helical membrane-spanning segment. Residues 46-298 (RYRRLKQLQK…RLRKAMLYVE (253 aa)) lie on the Cytoplasmic side of the membrane.

This sequence belongs to the mpaB oxygenase family.

The protein resides in the endoplasmic reticulum membrane. The enzyme catalyses 4-farnesyl-3,5-dihydroxy-6-methylphthalide + AH2 + 2 O2 = (4E,8E)-10-(4,6-dihydroxy-7-methyl-3-oxo-1,3-dihydro-2-benzofuran-5-yl)-4,8-dimethyldeca-4,8-dienoate + acetone + A + H2O + H(+). Its pathway is secondary metabolite biosynthesis; terpenoid biosynthesis. ER-bound oxygenase; part of the gene cluster that mediates the biosynthesis of mycophenolic acid (MPA), the first isolated antibiotic natural product in the world obtained from a culture of Penicillium brevicompactum in 1893. MpaB catalyzes the oxidative cleavage the C19-C20 double bond in farnesyl-DHMP (FDHMP) to yield FDHMP-3C via a mycophenolic aldehyde intermediate. The first step of the pathway is the synthesis of 5-methylorsellinic acid (5MOA) by the cytosolic polyketide synthase mpaC. 5MOA is then converted to the phthalide compound 5,7-dihydroxy-4,6-dimethylphthalide (DHMP) by the endoplasmic reticulum-bound cytochrome P450 monooxygenase mpaDE. MpaDE first catalyzes hydroxylation of 5-MOA to 4,6-dihydroxy-2-(hydroxymethyl)-3-methylbenzoic acid (DHMB). MpaDE then acts as a lactone synthase that catalyzes the ring closure to convert DHMB into DHMP. The next step is the prenylation of DHMP by the Golgi apparatus-associated prenyltransferase mpaA to yield farnesyl-DHMP (FDHMP). The ER-bound oxygenase mpaB then mediates the oxidative cleavage the C19-C20 double bond in FDHMP to yield FDHMP-3C via a mycophenolic aldehyde intermediate. The O-methyltransferase mpaG catalyzes the methylation of FDHMP-3C to yield MFDHMP-3C. After the cytosolic methylation of FDHMP-3C, MFDHMP-3C enters into peroxisomes probably via free diffusion due to its low molecular weight. Upon a peroxisomal CoA ligation reaction, catalyzed by a beta-oxidation component enzyme acyl-CoA ligase ACL891, MFDHMP-3C-CoA would then be restricted to peroxisomes for the following beta-oxidation pathway steps. The peroxisomal beta-oxidation machinery than converts MFDHMP-3C-CoA into MPA_CoA, via a beta-oxidation chain-shortening process. Finally mpaH acts as a peroxisomal acyl-CoA hydrolase with high substrate specificity toward MPA-CoA to release the final product MPA. This Penicillium roqueforti (strain FM164) protein is ER-bound oxygenase mpaB.